The chain runs to 437 residues: UDP-N-acetylmuramate--L-alanine ligase (437 aa).

ATP is bound at residue 108-114 (GAHGKTS).

This sequence belongs to the MurCDEF family.

The protein localises to the cytoplasm. The enzyme catalyses UDP-N-acetyl-alpha-D-muramate + L-alanine + ATP = UDP-N-acetyl-alpha-D-muramoyl-L-alanine + ADP + phosphate + H(+). Its pathway is cell wall biogenesis; peptidoglycan biosynthesis. Its function is as follows. Cell wall formation. This Staphylococcus aureus protein is UDP-N-acetylmuramate--L-alanine ligase.